A 102-amino-acid chain; its full sequence is Large ribosomal subunit protein bL21 (102 aa).

It belongs to the bacterial ribosomal protein bL21 family. As to quaternary structure, part of the 50S ribosomal subunit. Contacts protein L20.

This protein binds to 23S rRNA in the presence of protein L20. The protein is Large ribosomal subunit protein bL21 of Staphylococcus aureus.